A 635-amino-acid polypeptide reads, in one-letter code: Threonine--tRNA ligase (635 aa).

The TGS domain maps to 1 to 62 (MITITLPDGS…EHDAMLRIIT (62 aa)). The tract at residues 244 to 535 (DHRKIGKVQD…LIEHYAGIWP (292 aa)) is catalytic. Zn(2+) is bound by residues cysteine 335, histidine 386, and histidine 512.

This sequence belongs to the class-II aminoacyl-tRNA synthetase family. Homodimer. Requires Zn(2+) as cofactor.

It localises to the cytoplasm. It catalyses the reaction tRNA(Thr) + L-threonine + ATP = L-threonyl-tRNA(Thr) + AMP + diphosphate + H(+). Catalyzes the attachment of threonine to tRNA(Thr) in a two-step reaction: L-threonine is first activated by ATP to form Thr-AMP and then transferred to the acceptor end of tRNA(Thr). Also edits incorrectly charged L-seryl-tRNA(Thr). The protein is Threonine--tRNA ligase of Xylella fastidiosa (strain 9a5c).